A 530-amino-acid chain; its full sequence is T-box transcription factor TBX21 (530 aa).

Residues 1 to 55 (MGIVEPGCGDMLTGTEPMPSDEGRGPGADQQHRFFYPEPGAQDPTDRRAGSSLGT) form a disordered region. Ser-52 is modified (phosphoserine). Thr-55 bears the Phosphothreonine mark. Tyr-76 and Tyr-117 each carry phosphotyrosine. Residues 140-325 (LSNHLLWSKF…NNPFAKGFRE (186 aa)) constitute a DNA-binding region (T-box). The residue at position 219 (Tyr-219) is a Phosphotyrosine; by ABL1. Phosphoserine is present on Ser-224. Tyr-265 bears the Phosphotyrosine; by ABL1 mark. Residue Thr-302 is modified to Phosphothreonine. At Tyr-304 the chain carries Phosphotyrosine; by ABL1. Lys-313 is covalently cross-linked (Glycyl lysine isopeptide (Lys-Gly) (interchain with G-Cter in ubiquitin)). The segment at 444–530 (AGWFRPMRTL…EGQFYNYFPN (87 aa)) is disordered. The span at 462 to 482 (SEEQGSSPSLWPEVTSLQPEP) shows a compositional bias: polar residues. Low complexity predominate over residues 498 to 515 (SPYPSSGDSSSPAGAPSP). Residue Ser-508 is modified to Phosphoserine. At Tyr-525 the chain carries Phosphotyrosine; by ITK.

Interacts with RUNX1 and RUNX3. Interacts with ITK. The phosphorylated form (at Tyr-525) interacts with GATA3. Interacts with ABL1. Interacts with RELA. The phosphorylated form (at Thr-302) interacts with NFATC2. Interacts with KDM6B. Interacts with SMARCA4 in a KDM6B-dependent manner. Interacts with CCTN1 and CDK9. Interacts with USP10. Post-translationally, phosphorylations at Ser-52, Tyr-76, Ser-224 and Ser-508 are regulated by mTORC1. Phosphorylation at Tyr-525 is essential for its interaction GATA3. Phosphorylation at Tyr-219, Tyr-265 and Tyr-304 enhances its transcriptional activator activity. Phosphorylation at Thr-302 is required for its interaction with NFATC2. Ubiquitinated at Lys-313, leading to its degradation by the proteasome. Ubiquitination is essential for controlling protein stability, binding to the T-box-binding element of the IFN-gamma promoter, and for interaction with NFATC2 through induction of phosphorylation at Thr-302. Deubiquitinated by USP10 leading to its stabilization. T-cell specific. Expressed in regulatory T (TReg) cells.

The protein localises to the nucleus. Lineage-defining transcription factor which initiates Th1 lineage development from naive Th precursor cells both by activating Th1 genetic programs and by repressing the opposing Th2 and Th17 genetic programs. Activates transcription of a set of genes important for Th1 cell function, including those encoding IFN-gamma and the chemokine receptor CXCR3. Activates IFNG and CXCR3 genes in part by recruiting chromatin remodeling complexes including KDM6B, a SMARCA4-containing SWI/SNF-complex, and an H3K4me2-methyltransferase complex to their promoters and all of these complexes serve to establish a more permissive chromatin state conducive with transcriptional activation. Can activate Th1 genes also via recruitment of Mediator complex and P-TEFb (composed of CDK9 and CCNT1/cyclin-T1) in the form of the super elongation complex (SEC) to super-enhancers and associated genes in activated Th1 cells. Inhibits the Th17 cell lineage commitment by blocking RUNX1-mediated transactivation of Th17 cell-specific transcriptinal regulator RORC. Inhibits the Th2 cell lineage commitment by suppressing the production of Th2 cytokines, such as IL-4, IL-5, and IL- 13, via repression of transcriptional regulators GATA3 and NFATC2. Protects Th1 cells from amplifying aberrant type-I IFN response in an IFN-gamma abundant microenvironment by acting as a repressor of type-I IFN transcription factors and type-I IFN- stimulated genes. Acts as a regulator of antiviral B-cell responses; controls chronic viral infection by promoting the antiviral antibody IgG2a isotype switching and via regulation of a broad antiviral gene expression program. The chain is T-box transcription factor TBX21 (Tbx21) from Mus musculus (Mouse).